The chain runs to 122 residues: Small ribosomal subunit protein uS13 (122 aa).

The segment at 97-122 is disordered; that stretch reads PVRGQKTKSNARTRKGPRPSRIKKKK. Over residues 101–122 the composition is skewed to basic residues; it reads QKTKSNARTRKGPRPSRIKKKK.

It belongs to the universal ribosomal protein uS13 family. In terms of assembly, part of the 30S ribosomal subunit. Forms a loose heterodimer with protein S19. Forms two bridges to the 50S subunit in the 70S ribosome.

Its function is as follows. Located at the top of the head of the 30S subunit, it contacts several helices of the 16S rRNA. In the 70S ribosome it contacts the 23S rRNA (bridge B1a) and protein L5 of the 50S subunit (bridge B1b), connecting the 2 subunits; these bridges are implicated in subunit movement. Contacts the tRNAs in the A and P-sites. The chain is Small ribosomal subunit protein uS13 from Thermosipho melanesiensis (strain DSM 12029 / CIP 104789 / BI429).